A 244-amino-acid polypeptide reads, in one-letter code: Trypsin (244 aa).

An N-terminal signal peptide occupies residues 1-15 (MKFLVILVLLGAAVA). A propeptide spans 16 to 21 (FEDDDK) (activation peptide). Positions 22–242 (IVGGFTCAKN…FVTWIQSTIS (221 aa)) constitute a Peptidase S1 domain. 6 disulfide bridges follow: C28/C158, C46/C62, C130/C231, C137/C204, C169/C183, and C194/C218. The Charge relay system role is filled by H61. Residues E73, N75, and E83 each contribute to the Ca(2+) site. D105 serves as the catalytic Charge relay system. The active-site Charge relay system is the S198.

It belongs to the peptidase S1 family. Requires Ca(2+) as cofactor.

It is found in the secreted. It localises to the extracellular space. It catalyses the reaction Preferential cleavage: Arg-|-Xaa, Lys-|-Xaa.. In Xenopus laevis (African clawed frog), this protein is Trypsin.